The sequence spans 399 residues: 26S proteasome regulatory subunit 10B homolog A (399 aa).

Position 2 is an N-acetylthreonine (T2). An ATP-binding site is contributed by 180–187; sequence GPPGTGKT. K203 participates in a covalent cross-link: Glycyl lysine isopeptide (Lys-Gly) (interchain with G-Cter in ubiquitin).

This sequence belongs to the AAA ATPase family. As to quaternary structure, component of the 19S regulatory particle (RP/PA700) base subcomplex of the 26S proteasome. The 26S proteasome is composed of a core protease (CP), known as the 20S proteasome, capped at one or both ends by the 19S regulatory particle (RP/PA700). The RP/PA700 complex is composed of at least 17 different subunits in two subcomplexes, the base and the lid, which form the portions proximal and distal to the 20S proteolytic core, respectively.

It is found in the cytoplasm. Its subcellular location is the nucleus. Functionally, the 26S proteasome is involved in the ATP-dependent degradation of ubiquitinated proteins. The regulatory (or ATPase) complex confers ATP dependency and substrate specificity to the 26S complex. The sequence is that of 26S proteasome regulatory subunit 10B homolog A (RPT4A) from Arabidopsis thaliana (Mouse-ear cress).